We begin with the raw amino-acid sequence, 292 residues long: Large ribosomal subunit protein bL19m (292 aa).

The segment at 41-60 is disordered; the sequence is SRFQSTGPSEPGGFKPPPKP. Residue Ser-77 is modified to Phosphoserine.

It belongs to the bacterial ribosomal protein bL19 family. As to quaternary structure, component of the mitochondrial ribosome large subunit (39S) which comprises a 16S rRNA and about 50 distinct proteins.

The protein resides in the mitochondrion. The sequence is that of Large ribosomal subunit protein bL19m (Mrpl19) from Mus musculus (Mouse).